Consider the following 225-residue polypeptide: 7-cyano-7-deazaguanine synthase (225 aa).

Position 10 to 20 (Leu-10 to Ala-20) interacts with ATP. Residues Cys-191, Cys-199, Cys-202, and Cys-205 each contribute to the Zn(2+) site.

The protein belongs to the QueC family. Zn(2+) is required as a cofactor.

It carries out the reaction 7-carboxy-7-deazaguanine + NH4(+) + ATP = 7-cyano-7-deazaguanine + ADP + phosphate + H2O + H(+). It functions in the pathway purine metabolism; 7-cyano-7-deazaguanine biosynthesis. Functionally, catalyzes the ATP-dependent conversion of 7-carboxy-7-deazaguanine (CDG) to 7-cyano-7-deazaguanine (preQ(0)). The sequence is that of 7-cyano-7-deazaguanine synthase from Prochlorococcus marinus (strain NATL2A).